Consider the following 380-residue polypeptide: Ribosomal RNA large subunit methyltransferase G (380 aa).

It belongs to the methyltransferase superfamily. RlmG family.

Its subcellular location is the cytoplasm. It catalyses the reaction guanosine(1835) in 23S rRNA + S-adenosyl-L-methionine = N(2)-methylguanosine(1835) in 23S rRNA + S-adenosyl-L-homocysteine + H(+). In terms of biological role, specifically methylates the guanine in position 1835 (m2G1835) of 23S rRNA. The sequence is that of Ribosomal RNA large subunit methyltransferase G from Streptomyces avermitilis (strain ATCC 31267 / DSM 46492 / JCM 5070 / NBRC 14893 / NCIMB 12804 / NRRL 8165 / MA-4680).